A 458-amino-acid chain; its full sequence is UDP-N-acetylmuramate--L-alanine ligase (458 aa).

An ATP-binding site is contributed by 119 to 125 (GTHGKTT).

It belongs to the MurCDEF family.

Its subcellular location is the cytoplasm. The enzyme catalyses UDP-N-acetyl-alpha-D-muramate + L-alanine + ATP = UDP-N-acetyl-alpha-D-muramoyl-L-alanine + ADP + phosphate + H(+). It functions in the pathway cell wall biogenesis; peptidoglycan biosynthesis. Functionally, cell wall formation. In Phocaeicola vulgatus (strain ATCC 8482 / DSM 1447 / JCM 5826 / CCUG 4940 / NBRC 14291 / NCTC 11154) (Bacteroides vulgatus), this protein is UDP-N-acetylmuramate--L-alanine ligase.